Reading from the N-terminus, the 98-residue chain is NADH-ubiquinone oxidoreductase chain 4L (98 aa).

3 consecutive transmembrane segments (helical) span residues 1-21, 29-49, and 61-81; these read MSMV…GLLV, SLLC…MAIL, and IILL…LVMV.

The protein belongs to the complex I subunit 4L family. Core subunit of respiratory chain NADH dehydrogenase (Complex I) which is composed of 45 different subunits.

The protein localises to the mitochondrion inner membrane. It carries out the reaction a ubiquinone + NADH + 5 H(+)(in) = a ubiquinol + NAD(+) + 4 H(+)(out). In terms of biological role, core subunit of the mitochondrial membrane respiratory chain NADH dehydrogenase (Complex I) which catalyzes electron transfer from NADH through the respiratory chain, using ubiquinone as an electron acceptor. Part of the enzyme membrane arm which is embedded in the lipid bilayer and involved in proton translocation. The protein is NADH-ubiquinone oxidoreductase chain 4L (MT-ND4L) of Lynx canadensis (Canada lynx).